The following is a 592-amino-acid chain: Anaphase-promoting complex subunit 8 (592 aa).

TPR repeat units follow at residues 66–99 (EYYKYILAKNYFDLKEYRRCSDVLIDCNKYQLPI), 160–193 (QQQQQQQQQKIEQCQEFKQLFQFYKKLYIENKKD), 291–324 (TYILAQTAIGNYNLRAYDIGEELFERLIELEPNR), 359–392 (PETCCIIGNYYSLKLEHDKAILYFQRALKLNDRY), 393–426 (LSAWTLIGHEFLEIKNVSAAINAYRKAVDINPRD), 428–460 (RAWYGLGQTYQLLKLPLYSLYYFKKATTLRPYD), 461–494 (PRMWCAAGGCYEFIERIPEAIKCYERAEENYDRE), and 496–528 (VAINKLAKLYQEIQNNEKAAFYYKKNLYYCDQE). The segment at 129–166 (QQQAQQQAQQAQQESQQNDKNNDTNNNNKTDQQQQQQQ) is disordered.

It belongs to the APC8/CDC23 family. The APC/C is composed of at least 13 subunits that stay tightly associated throughout the cell cycle: anapc1, anapc2, anapc3, anapc4, anapc5, anapc6, anapc7, anapc8, anapc10, anapc11, cdc20, cdc26 and cdh1.

The protein resides in the nucleus. It participates in protein modification; protein ubiquitination. Its function is as follows. Component of the anaphase promoting complex/cyclosome (APC/C), a cell cycle-regulated E3 ubiquitin-protein ligase complex that controls progression through mitosis and the G1 phase of the cell cycle. This Dictyostelium discoideum (Social amoeba) protein is Anaphase-promoting complex subunit 8 (anapc8).